A 309-amino-acid polypeptide reads, in one-letter code: Sodium/potassium-transporting ATPase subunit beta-1 (309 aa).

Over 1 to 45 (MSKNNGKGAKGEFEFPQPAKKQTFSEMIYNPQEGTFFGRTGKSWS) the chain is Cytoplasmic. The helical; Signal-anchor for type II membrane protein transmembrane segment at 46–66 (QLLLFYTIFYIVLAALFTICM) threads the bilayer. Residues 67-309 (QGLLSTISDT…GSVTFQILLD (243 aa)) lie on the Extracellular side of the membrane. An N-linked (GlcNAc...) asparagine glycan is attached at N133. Intrachain disulfides connect C143–C155 and C165–C179. N-linked (GlcNAc...) asparagine glycosylation is present at N211. The cysteines at positions 225 and 282 are disulfide-linked.

It belongs to the X(+)/potassium ATPases subunit beta family. In terms of assembly, the sodium/potassium-transporting ATPase is composed of a catalytic alpha subunit, an auxiliary non-catalytic beta subunit and an additional regulatory subunit. Interacts with nkain. In embryos, it is expressed in the neurons of the CNS and PNS, in Garland cells and posterior spiracles. In adults, it is concentrated in the thorax and abdomen (muscle tissue, digestive system and Malpighian tubules) and weakly expressed in the head. Expression is diffuse in the nervous system.

It localises to the cell membrane. This is the non-catalytic component of the active enzyme, which catalyzes the hydrolysis of ATP coupled with the exchange of Na(+) and K(+) ions across the plasma membrane. The beta subunit regulates, through assembly of alpha/beta heterodimers, the number of sodium pumps transported to the plasma membrane. In Drosophila melanogaster (Fruit fly), this protein is Sodium/potassium-transporting ATPase subunit beta-1 (nrv1).